We begin with the raw amino-acid sequence, 389 residues long: MKVHEYQAKEILRRHNANVPFGKVIDAVGDFEKAYNEVVQKSPVVVVKAQIHAGGRGKGGGVKVAKTKDDAKAAAEKILGMQLITPQTGPEGKKVLKVYLEQGLEIAKEYYLSILLDRAIRKTIIMASTEGGMEIEEVAETHPEKIIKIQIDPGIGIQGSQVRELAFALGIPTEAQKSFTALVNSVYNAYIKEDAALLEINPLILTKQNEIIAGDCKMDLDENALYRHPDNEALRDITEEDPYEVKAKEYNLNYVKLDGNIGCMVNGAGLAMATMDIVKLAGAEPANFLDVGGGANPTTVENGFRLILSDPNVKGIFVNVFGGIVRCDRVAVGIIEATKKVNVSVPVVVRLKGTNAEEGKKILNESGMNIVGVEGLRDAADKIVSLIKK.

Residues 9–246 (KEILRRHNAN…ITEEDPYEVK (238 aa)) form the ATP-grasp domain. ATP is bound by residues lysine 48, 55 to 57 (GRG), glutamate 101, leucine 104, and glutamate 109. Asparagine 201 and aspartate 215 together coordinate Mg(2+). Residues asparagine 266 and 323–325 (GIV) each bind substrate.

It belongs to the succinate/malate CoA ligase beta subunit family. Heterotetramer of two alpha and two beta subunits. Mg(2+) is required as a cofactor.

It catalyses the reaction succinate + ATP + CoA = succinyl-CoA + ADP + phosphate. The catalysed reaction is GTP + succinate + CoA = succinyl-CoA + GDP + phosphate. The protein operates within carbohydrate metabolism; tricarboxylic acid cycle; succinate from succinyl-CoA (ligase route): step 1/1. Succinyl-CoA synthetase functions in the citric acid cycle (TCA), coupling the hydrolysis of succinyl-CoA to the synthesis of either ATP or GTP and thus represents the only step of substrate-level phosphorylation in the TCA. The beta subunit provides nucleotide specificity of the enzyme and binds the substrate succinate, while the binding sites for coenzyme A and phosphate are found in the alpha subunit. The protein is Succinate--CoA ligase [ADP-forming] subunit beta of Leptospira biflexa serovar Patoc (strain Patoc 1 / Ames).